Consider the following 835-residue polypeptide: Disease resistance protein RPP13 (835 aa).

A coiled-coil region spans residues 25 to 41 (MAVKEDLEELKTELTCI). One can recognise an NB-ARC domain in the interval 144–453 (SSLRVRQLRR…AEGFIQGDEE (310 aa)). An ATP-binding site is contributed by 192–199 (GMGGLGKT).

It belongs to the disease resistance NB-LRR family. RPP13 subfamily.

Disease resistance protein. Resistance proteins guard the plant against pathogens that contain an appropriate avirulence protein via an indirect interaction with this avirulence protein. That triggers a defense system including the hypersensitive response, which restricts the pathogen growth. In contrast to other resistance proteins, it works independently of ESD1 and NSD1 proteins and does not require the accumulation of salicylic acid, suggesting the existence of an independent signaling pathway. The specificity to avirulence proteins differs in the different cultivars. The chain is Disease resistance protein RPP13 (RPP13) from Arabidopsis thaliana (Mouse-ear cress).